We begin with the raw amino-acid sequence, 485 residues long: NADH-quinone oxidoreductase subunit N (485 aa).

The next 14 membrane-spanning stretches (helical) occupy residues 8-28 (LIAL…MLSI), 35-55 (FLNA…LWFV), 71-91 (GFAM…CTFA), 105-125 (FYLL…ANHL), 127-147 (SLFL…GYAF), 159-179 (YTIL…LVYA), 203-223 (LLAG…LVPF), 235-255 (PAPV…GVVM), 271-291 (VVLA…ALSQ), 297-317 (LLGY…IALQ), 326-346 (VGVY…VVSL), 373-393 (AAVM…LGFI), 408-430 (WWLV…RVAV), and 455-475 (IVVL…QPLI).

This sequence belongs to the complex I subunit 2 family. As to quaternary structure, NDH-1 is composed of 13 different subunits. Subunits NuoA, H, J, K, L, M, N constitute the membrane sector of the complex.

It localises to the cell inner membrane. It carries out the reaction a quinone + NADH + 5 H(+)(in) = a quinol + NAD(+) + 4 H(+)(out). In terms of biological role, NDH-1 shuttles electrons from NADH, via FMN and iron-sulfur (Fe-S) centers, to quinones in the respiratory chain. The immediate electron acceptor for the enzyme in this species is believed to be ubiquinone. Couples the redox reaction to proton translocation (for every two electrons transferred, four hydrogen ions are translocated across the cytoplasmic membrane), and thus conserves the redox energy in a proton gradient. This chain is NADH-quinone oxidoreductase subunit N, found in Shigella dysenteriae serotype 1 (strain Sd197).